A 173-amino-acid polypeptide reads, in one-letter code: C-phycocyanin beta subunit (173 aa).

The residue at position 73 (N73) is an N4-methylasparagine. (2R,3E)-phycocyanobilin contacts are provided by C83 and C154.

The protein belongs to the phycobiliprotein family. Heterodimer of an alpha and a beta subunit. Heterodimers further assemble into trimers and the trimers into hexamers. In terms of processing, contains two covalently linked bilin chromophores.

It is found in the cellular thylakoid membrane. Its function is as follows. Light-harvesting photosynthetic bile pigment-protein from the phycobiliprotein complex (phycobilisome, PBS). Phycocyanin is the major phycobiliprotein in the PBS rod. This chain is C-phycocyanin beta subunit (cpcB), found in Mastigocladus laminosus (Fischerella sp.).